Consider the following 756-residue polypeptide: Xylosyl- and glucuronyltransferase LARGE1 (756 aa).

Topologically, residues 1–10 (MLGICRGRRK) are cytoplasmic. Residues 11–31 (FLAASLSLLCIPAITWIYLFS) form a helical; Signal-anchor for type II membrane protein membrane-spanning segment. Residues 32–756 (GSFEDGKPVS…LKYLTAENNS (725 aa)) are Lumenal-facing. 2 disordered regions span residues 43–69 (SPLE…EVRM) and 81–109 (RQLS…EGTG). A compositionally biased stretch (polar residues) spans 44–58 (PLESQAHSPRYTASS). Positions 53 to 95 (RYTASSQRERESLEVRMREVEEENRALRRQLSLAQGRAPSHRR) form a coiled coil. The segment covering 59 to 69 (QRERESLEVRM) has biased composition (basic and acidic residues). N-linked (GlcNAc...) asparagine glycans are attached at residues asparagine 97, asparagine 122, and asparagine 148. Residues 138–413 (IHVAIVCAGY…FLEYDGNLLR (276 aa)) are xylosyltransferase activity. Mn(2+) is bound by residues aspartate 242 and aspartate 244. Asparagine 272 is a glycosylation site (N-linked (GlcNAc...) asparagine). Positions 414–756 (RELFGCPSEA…LKYLTAENNS (343 aa)) are glucuronyltransferase activity. Residues aspartate 563 and aspartate 565 each contribute to the Mn(2+) site.

This sequence in the C-terminal section; belongs to the glycosyltransferase 49 family. The protein in the N-terminal section; belongs to the glycosyltransferase 8 family. In terms of assembly, interacts with DAG1 (via the N-terminal domain of alpha-DAG1); the interaction increases binding of DAG1 to laminin. Interacts with B4GAT1. Mn(2+) serves as cofactor. As to expression, ubiquitous. Highest expression in heart, brain and skeletal muscle.

The protein resides in the golgi apparatus membrane. The enzyme catalyses 3-O-[beta-D-GlcA-(1-&gt;3)-beta-D-Xyl-(1-&gt;4)-Rib-ol-P-Rib-ol-P-3-beta-D-GalNAc-(1-&gt;3)-beta-D-GlcNAc-(1-&gt;4)-(O-6-P-alpha-D-Man)]-Thr-[protein] + UDP-alpha-D-xylose = 3-O-[alpha-D-Xyl-(1-&gt;3)-beta-D-GlcA-(1-&gt;4)-beta-D-Xyl-(1-&gt;4)-Rib-ol-P-Rib-ol-P-3-beta-D-GalNAc-(1-&gt;3)-beta-D-GlcNAc-(1-&gt;4)-(O-6-P-alpha-D-Man)]-Thr-[protein] + UDP + H(+). The catalysed reaction is 3-O-{(1-&gt;[3)-alpha-D-Xyl-(1-&gt;3)-beta-D-GlcA-(1-&gt;](n)-4)-beta-D-Xyl-(1-&gt;4)-Rib-ol-P-Rib-ol-P-3-beta-D-GalNAc-(1-&gt;3)-beta-D-GlcNAc-(1-&gt;4)-O-6-P-alpha-D-Man}-L-Thr-[protein] + UDP-alpha-D-glucuronate = 3-O-{beta-D-GlcA-(1-&gt;[3)-alpha-D-Xyl-(1-&gt;3)-beta-D-GlcA-(1-&gt;](n)-4)-beta-D-Xyl-(1-&gt;4)-Rib-ol-P-Rib-ol-P-3-beta-D-GalNAc-(1-&gt;3)-beta-D-GlcNAc-(1-&gt;4)-O-6-P-alpha-D-Man}-L-Thr-[protein] + UDP + H(+). It carries out the reaction 3-O-{beta-D-GlcA-(1-&gt;[3)-alpha-D-Xyl-(1-&gt;3)-beta-D-GlcA-(1-&gt;](n)-4)-beta-D-Xyl-(1-&gt;4)-Rib-ol-P-Rib-ol-P-3-beta-D-GalNAc-(1-&gt;3)-beta-D-GlcNAc-(1-&gt;4)-O-6-P-alpha-D-Man}-L-Thr-[protein] + UDP-alpha-D-xylose = 3-O-{(1-&gt;[3)-alpha-D-Xyl-(1-&gt;3)-beta-D-GlcA-(1-&gt;](n+1)-4)-beta-D-Xyl-(1-&gt;4)-Rib-ol-P-Rib-ol-P-3-beta-D-GalNAc-(1-&gt;3)-beta-D-GlcNAc-(1-&gt;4)-O-6-P-alpha-D-Man}-L-Thr-[protein] + UDP + H(+). It participates in protein modification; protein glycosylation. Bifunctional glycosyltransferase with both alpha-1,3-xylosyltransferase and beta-1,3-glucuronyltransferase activities involved in the maturation of alpha-dystroglycan (DAG1) by glycosylation leading to DAG1 binding to laminin G-like domain-containing extracellular proteins with high affinity. Elongates the glucuronyl-beta-1,4-xylose-beta disaccharide primer structure initiated by B4GAT1 by adding repeating units [-3-Xylose-alpha-1,3-GlcA-beta-1-] to produce a heteropolysaccharide. Requires the phosphorylation of core M3 (O-mannosyl trisaccharide) by POMK to elongate the glucuronyl-beta-1,4-xylose-beta disaccharide primer. Plays a key role in skeletal muscle function and regeneration. In Homo sapiens (Human), this protein is Xylosyl- and glucuronyltransferase LARGE1.